Consider the following 279-residue polypeptide: MVWFKRGIPSIKTTDKRDTPEGLWSKCDECGAALHKKQLEDHLYTCPECGHHFRISPDLYFSFLFDDGAWDEFDGQLRAADPLTFVDTKKYPDRVRDTMQKSGKSEACRNATGSMGGSAAVISAMDFGFIGGSMGSVVGEKISRAADKSVELNAPLILISQSGGARMMEGAFSLMQMAKTSARLTRLGERNIPFISLMTDPTMGGISASYAMLGDLNISEPKALIGFAGPRVIRDTIKRDLPEGFQRAEFLKEHGFVDMIVHRKDLRLQLIKLFKHLRG.

The CoA carboxyltransferase N-terminal domain maps to 23–279 (LWSKCDECGA…LIKLFKHLRG (257 aa)). Residues Cys-27, Cys-30, Cys-46, and Cys-49 each coordinate Zn(2+). Residues 27–49 (CDECGAALHKKQLEDHLYTCPEC) form a C4-type zinc finger.

It belongs to the AccD/PCCB family. In terms of assembly, acetyl-CoA carboxylase is a heterohexamer composed of biotin carboxyl carrier protein (AccB), biotin carboxylase (AccC) and two subunits each of ACCase subunit alpha (AccA) and ACCase subunit beta (AccD). Zn(2+) serves as cofactor.

It is found in the cytoplasm. The catalysed reaction is N(6)-carboxybiotinyl-L-lysyl-[protein] + acetyl-CoA = N(6)-biotinyl-L-lysyl-[protein] + malonyl-CoA. It participates in lipid metabolism; malonyl-CoA biosynthesis; malonyl-CoA from acetyl-CoA: step 1/1. Its function is as follows. Component of the acetyl coenzyme A carboxylase (ACC) complex. Biotin carboxylase (BC) catalyzes the carboxylation of biotin on its carrier protein (BCCP) and then the CO(2) group is transferred by the transcarboxylase to acetyl-CoA to form malonyl-CoA. In Chlorobaculum parvum (strain DSM 263 / NCIMB 8327) (Chlorobium vibrioforme subsp. thiosulfatophilum), this protein is Acetyl-coenzyme A carboxylase carboxyl transferase subunit beta.